The sequence spans 247 residues: MDVKLLEATDDPEDLICKAARNDYSDTSVGSQSFEATMAEVDGDSLEEKKETLIGHLLDHGHFGPFEHAQATFAVEGVSRSCMAQITRHRHVSFDVQSMRYVSFDDVDPEAVREGELVVTPPSATDPDWIGRNQQKASVSDEEFEERAEIFKDTIEQAVESYQELLELGMPPEDARFVLPIGTKVNIVMSMNARMLMHVADMRAAADAQWEIREMTEEMLELAADWCPKTFEYYEQEMKGRKNRLAP.

The region spanning Met-1 to Glu-237 is the ThyX domain. DUMP-binding positions include Gln-85–Arg-88, Ser-98–Arg-100, and Arg-176. Arg-88–Arg-90 contributes to the FAD binding site. The short motif at Arg-88 to Ser-98 is the ThyX motif element. Residues Asn-192–Arg-194 and His-198 each bind FAD. Residue Arg-203 coordinates dUMP. Catalysis depends on Arg-203, which acts as the Involved in ionization of N3 of dUMP, leading to its activation.

It belongs to the thymidylate synthase ThyX family. Homotetramer. FAD serves as cofactor.

It carries out the reaction dUMP + (6R)-5,10-methylene-5,6,7,8-tetrahydrofolate + NADPH + H(+) = dTMP + (6S)-5,6,7,8-tetrahydrofolate + NADP(+). It functions in the pathway pyrimidine metabolism; dTTP biosynthesis. Functionally, catalyzes the reductive methylation of 2'-deoxyuridine-5'-monophosphate (dUMP) to 2'-deoxythymidine-5'-monophosphate (dTMP) while utilizing 5,10-methylenetetrahydrofolate (mTHF) as the methyl donor, and NADPH and FADH(2) as the reductant. The protein is Flavin-dependent thymidylate synthase of Haloarcula marismortui (strain ATCC 43049 / DSM 3752 / JCM 8966 / VKM B-1809) (Halobacterium marismortui).